Consider the following 163-residue polypeptide: Ribosome maturation factor RimM (163 aa).

The PRC barrel domain maps to 92–162 (EDEFYVADLV…AGRAVVRPPE (71 aa)).

The protein belongs to the RimM family. In terms of assembly, binds ribosomal protein uS19.

It localises to the cytoplasm. Functionally, an accessory protein needed during the final step in the assembly of 30S ribosomal subunit, possibly for assembly of the head region. Essential for efficient processing of 16S rRNA. May be needed both before and after RbfA during the maturation of 16S rRNA. It has affinity for free ribosomal 30S subunits but not for 70S ribosomes. This chain is Ribosome maturation factor RimM, found in Rubrobacter xylanophilus (strain DSM 9941 / JCM 11954 / NBRC 16129 / PRD-1).